A 435-amino-acid chain; its full sequence is MQVTVETLEGLERRLNITVPAANIEDAVTAELRNIAKNRRFDGFRKGKVPLKMVAKMYGKAVRQDVLGEVMQRHFIEAIVKEKINPAGAPTFAPVENNEGADLVFTATFEVYPEVELKGLDSITVEKPTTEVNDSDVEEMIETLRKQQATWAEVEEAAEAGKRVSIDFVGSIDGEEFEGGKAENFPLEMGAGRMIPGFEDGIEGKTKGMEFEIDVNFPEDYHAENLKGKAAKFAIKVNKVEARELPELNDEFVSKFGVAEGGVEALKAEVRKNMERELKQAVKNRIKEQAIDGLVEQNEIDVPAALIDQEIQVLRQQAAQRFGGNPEAAAQLPRELFEEQAKRRVVVGLLLGEVIKSEELKADDEKVKALIEEMATAYEDPSEVIAYYEQNEQMMNNMRNVALEEQAIDAIIAKAQVSEKEVSFNELLNQQQPAA.

The 86-residue stretch at 161-246 folds into the PPIase FKBP-type domain; the sequence is GKRVSIDFVG…VNKVEARELP (86 aa).

The protein belongs to the FKBP-type PPIase family. Tig subfamily.

Its subcellular location is the cytoplasm. It catalyses the reaction [protein]-peptidylproline (omega=180) = [protein]-peptidylproline (omega=0). Its function is as follows. Involved in protein export. Acts as a chaperone by maintaining the newly synthesized protein in an open conformation. Functions as a peptidyl-prolyl cis-trans isomerase. The polypeptide is Trigger factor (Vibrio campbellii (strain ATCC BAA-1116)).